Consider the following 210-residue polypeptide: Redox-sensing transcriptional repressor Rex (210 aa).

The segment at residues 17–56 (KYHRYLNELMKNDVDRISSKELGEKIGFTASQIRQDLNCF) is a DNA-binding region (H-T-H motif). 91 to 96 (GAGNIG) serves as a coordination point for NAD(+).

It belongs to the transcriptional regulatory Rex family. Homodimer.

The protein resides in the cytoplasm. Modulates transcription in response to changes in cellular NADH/NAD(+) redox state. This chain is Redox-sensing transcriptional repressor Rex, found in Clostridium botulinum (strain Alaska E43 / Type E3).